The following is a 302-amino-acid chain: MTKKKGIDIIGVPSTFGQRKLGVDLGPTAIRYAGLIPRLKQLDLDVNDKGDIKVSAVDIEKFQSEQNGLRNYDEIIDVTQKLNKEVSASIENNRFPLVLGGDHSIAIGSVSAISKHYNNLGVIWYDAHGDLNIPEESPSGNIHGMPLRILTGEGPKELLELNSNVIKPENIVLIGMRDLDKGERQFIKDHNIKTFTMSDIDKLGIKEVIENTIEYLKSRNVDGVHLSLDVDALDPLETPGTGTRVLGGLTYRESHFALELLHQSQSVTSMDLVEVNPLIDHNNHTAEQSVSLVGTFFGETLL.

4 residues coordinate Mn(2+): His103, Asp126, His128, and Asp130. Residues 128-132 (HGDLN), 139-141 (SGN), and Asp180 contribute to the substrate site. The Mn(2+) site is built by Asp229 and Asp231. Thr243 and Glu274 together coordinate substrate.

Belongs to the arginase family. Mn(2+) is required as a cofactor.

It carries out the reaction L-arginine + H2O = urea + L-ornithine. Its pathway is nitrogen metabolism; urea cycle; L-ornithine and urea from L-arginine: step 1/1. The sequence is that of Arginase (arg) from Staphylococcus aureus (strain MRSA252).